Consider the following 509-residue polypeptide: MDEFQRNENKHRSWQQFFLYPLFFREDLYAIAHDHHLDRSGSSEPTEILVSHFFSFLTVKRSIRRIRKQNNSISLLRNCDRNQFSECKKNXCSKSLLEGLTVVLEVSFAMRSKHFIEGMDGWNSIRSIHCIFPLMEDKLTHSNYISDIRVPYSIHPEILVRIFRRWIRDTPSLHLLRSILHEWQNSFSRDNLQKAIITPRENTRFSLFLWNSYVHECESFLVPLVKRFFNSQSLLYGSFPDRTHFDKKMKHIVILXXRQISTKKIWLLKDSFMHYVRYGERSLIALKGTHLEVKKWRYHLFHFWQYYFHLWFQPYRIRSLELSKTYSSFLGYFLHVKMRPLVVRAKMLDNLFITDLITNELKLIAPIRSILFFLAKEKFCDISGWPISKLSWTSLSDDDILDRFDRIWINLFHYYSGSMNQDGLYHIKYILLLSCAKTLACKHKTTIRVVREQLGSELFTKSFSKEREFISSSFSKNRLKRERIWNSEISQINPLANFWQNMQNKQIEN.

Belongs to the intron maturase 2 family. MatK subfamily.

The protein localises to the plastid. The protein resides in the chloroplast. In terms of biological role, usually encoded in the trnK tRNA gene intron. Probably assists in splicing its own and other chloroplast group II introns. This chain is Maturase K, found in Metasequoia glyptostroboides (Dawn redwood).